The chain runs to 437 residues: Probable receptor-like serine/threonine-protein kinase At4g34500 (437 aa).

The helical transmembrane segment at 25–45 (LVIAICSVFILLISLLIFLFV) threads the bilayer. Residues 145-426 (FSDDNMIGEG…MLEAEDFPFR (282 aa)) enclose the Protein kinase domain. Residues 151 to 159 (IGEGGYGVV) and lysine 173 each bind ATP. Phosphotyrosine is present on tyrosine 220. Aspartate 273 serves as the catalytic Proton acceptor. Serine 277 carries the post-translational modification Phosphoserine. Residues threonine 307 and threonine 312 each carry the phosphothreonine modification. Phosphotyrosine is present on tyrosine 320.

It belongs to the protein kinase superfamily. Ser/Thr protein kinase family.

Its subcellular location is the cell membrane. The enzyme catalyses L-seryl-[protein] + ATP = O-phospho-L-seryl-[protein] + ADP + H(+). The catalysed reaction is L-threonyl-[protein] + ATP = O-phospho-L-threonyl-[protein] + ADP + H(+). This is Probable receptor-like serine/threonine-protein kinase At4g34500 from Arabidopsis thaliana (Mouse-ear cress).